Reading from the N-terminus, the 60-residue chain is Ribosome modulation factor (60 aa).

This sequence belongs to the ribosome modulation factor family.

The protein resides in the cytoplasm. Functionally, during stationary phase, converts 70S ribosomes to an inactive dimeric form (100S ribosomes). The sequence is that of Ribosome modulation factor from Kangiella koreensis (strain DSM 16069 / JCM 12317 / KCTC 12182 / SW-125).